We begin with the raw amino-acid sequence, 427 residues long: Probable threonylcarbamoyladenosine tRNA methylthiotransferase (427 aa).

Residues 12 to 118 (MRVYVEGYGC…AGEILKNYVE (107 aa)) enclose the MTTase N-terminal domain. [4Fe-4S] cluster-binding residues include Cys21, Cys57, Cys86, Cys155, Cys159, and Cys162. Positions 141–370 (LKPSLITPLP…DKLRRELSYL (230 aa)) constitute a Radical SAM core domain. Residues 373 to 427 (KKYIGKAMKVLVLDEGKGYTDNFKVVKFEGGEVGEFRKVKITDAKTFGLKGELIL) form the TRAM domain.

It belongs to the methylthiotransferase family. CDKAL1 subfamily. [4Fe-4S] cluster is required as a cofactor.

It carries out the reaction N(6)-L-threonylcarbamoyladenosine(37) in tRNA + (sulfur carrier)-SH + AH2 + 2 S-adenosyl-L-methionine = 2-methylsulfanyl-N(6)-L-threonylcarbamoyladenosine(37) in tRNA + (sulfur carrier)-H + 5'-deoxyadenosine + L-methionine + A + S-adenosyl-L-homocysteine + 2 H(+). Catalyzes the methylthiolation of N6-threonylcarbamoyladenosine (t(6)A), leading to the formation of 2-methylthio-N6-threonylcarbamoyladenosine (ms(2)t(6)A) at position 37 in tRNAs that read codons beginning with adenine. The sequence is that of Probable threonylcarbamoyladenosine tRNA methylthiotransferase from Methanocaldococcus jannaschii (strain ATCC 43067 / DSM 2661 / JAL-1 / JCM 10045 / NBRC 100440) (Methanococcus jannaschii).